The following is a 340-amino-acid chain: GTP 3',8-cyclase (340 aa).

The Radical SAM core domain maps to 20-246 (RFQRQYTYLR…PKAVNDGPAK (227 aa)). Arg-29 contributes to the GTP binding site. 2 residues coordinate [4Fe-4S] cluster: Cys-36 and Cys-40. Residue Tyr-42 participates in S-adenosyl-L-methionine binding. Cys-43 is a binding site for [4Fe-4S] cluster. Residue Arg-79 coordinates GTP. Gly-83 provides a ligand contact to S-adenosyl-L-methionine. Thr-110 provides a ligand contact to GTP. Ser-134 lines the S-adenosyl-L-methionine pocket. Lys-171 serves as a coordination point for GTP. Met-205 is an S-adenosyl-L-methionine binding site. [4Fe-4S] cluster contacts are provided by Cys-268 and Cys-271. 273 to 275 (RLR) is a binding site for GTP. Cys-285 contributes to the [4Fe-4S] cluster binding site.

It belongs to the radical SAM superfamily. MoaA family. As to quaternary structure, monomer and homodimer. [4Fe-4S] cluster serves as cofactor.

The catalysed reaction is GTP + AH2 + S-adenosyl-L-methionine = (8S)-3',8-cyclo-7,8-dihydroguanosine 5'-triphosphate + 5'-deoxyadenosine + L-methionine + A + H(+). Its pathway is cofactor biosynthesis; molybdopterin biosynthesis. Its function is as follows. Catalyzes the cyclization of GTP to (8S)-3',8-cyclo-7,8-dihydroguanosine 5'-triphosphate. The protein is GTP 3',8-cyclase of Haemophilus ducreyi (strain 35000HP / ATCC 700724).